The chain runs to 354 residues: Histidinol-phosphate aminotransferase (354 aa).

At K210 the chain carries N6-(pyridoxal phosphate)lysine.

This sequence belongs to the class-II pyridoxal-phosphate-dependent aminotransferase family. Histidinol-phosphate aminotransferase subfamily. As to quaternary structure, homodimer. Pyridoxal 5'-phosphate is required as a cofactor.

It catalyses the reaction L-histidinol phosphate + 2-oxoglutarate = 3-(imidazol-4-yl)-2-oxopropyl phosphate + L-glutamate. Its pathway is amino-acid biosynthesis; L-histidine biosynthesis; L-histidine from 5-phospho-alpha-D-ribose 1-diphosphate: step 7/9. The protein is Histidinol-phosphate aminotransferase of Clostridium botulinum (strain Langeland / NCTC 10281 / Type F).